The chain runs to 197 residues: Recombination protein RecR (197 aa).

The C4-type zinc-finger motif lies at 56–71; the sequence is CSRCFNLSAEDPCDIC. The 96-residue stretch at 79 to 174 folds into the Toprim domain; the sequence is ETICVVAEPR…RVTRIAFGLP (96 aa).

It belongs to the RecR family.

May play a role in DNA repair. It seems to be involved in an RecBC-independent recombinational process of DNA repair. It may act with RecF and RecO. In Gloeobacter violaceus (strain ATCC 29082 / PCC 7421), this protein is Recombination protein RecR.